The sequence spans 366 residues: Phospho-N-acetylmuramoyl-pentapeptide-transferase (366 aa).

10 consecutive transmembrane segments (helical) span residues 27–47 (AAMF…IASL), 71–91 (TPTM…LLWA), 93–113 (LSNV…AIGF), 134–154 (LAIE…AAKI), 174–194 (ALLN…VSAG), 205–225 (GLAI…AYLA), 245–265 (LAVI…FNAP), 268–288 (AIFM…TVAV), 294–314 (IVMV…IIQV), and 343–363 (QVVI…LATL).

Belongs to the glycosyltransferase 4 family. MraY subfamily. The cofactor is Mg(2+).

The protein resides in the cell inner membrane. It catalyses the reaction UDP-N-acetyl-alpha-D-muramoyl-L-alanyl-gamma-D-glutamyl-meso-2,6-diaminopimeloyl-D-alanyl-D-alanine + di-trans,octa-cis-undecaprenyl phosphate = di-trans,octa-cis-undecaprenyl diphospho-N-acetyl-alpha-D-muramoyl-L-alanyl-D-glutamyl-meso-2,6-diaminopimeloyl-D-alanyl-D-alanine + UMP. It functions in the pathway cell wall biogenesis; peptidoglycan biosynthesis. In terms of biological role, catalyzes the initial step of the lipid cycle reactions in the biosynthesis of the cell wall peptidoglycan: transfers peptidoglycan precursor phospho-MurNAc-pentapeptide from UDP-MurNAc-pentapeptide onto the lipid carrier undecaprenyl phosphate, yielding undecaprenyl-pyrophosphoryl-MurNAc-pentapeptide, known as lipid I. The chain is Phospho-N-acetylmuramoyl-pentapeptide-transferase from Allorhizobium ampelinum (strain ATCC BAA-846 / DSM 112012 / S4) (Agrobacterium vitis (strain S4)).